The chain runs to 395 residues: Carbohydrate sulfotransferase 6 (395 aa).

The Cytoplasmic portion of the chain corresponds to 1-5; the sequence is MWLPR. Residues 6–26 form a helical; Signal-anchor for type II membrane protein membrane-spanning segment; sequence VSSTAVTALLLAQTFLLLFLV. Residues 27 to 395 lie on the Lumenal side of the membrane; it reads SRPGPSSPAG…ASSTASHPRN (369 aa). 49-55 is a 3'-phosphoadenylyl sulfate binding site; it reads WRSGSSF. The N-linked (GlcNAc...) asparagine glycan is linked to N116. 202-210 serves as a coordination point for 3'-phosphoadenylyl sulfate; it reads RDPRAVLRS. 3 N-linked (GlcNAc...) asparagine glycosylation sites follow: N229, N305, and N328.

The protein belongs to the sulfotransferase 1 family. Gal/GlcNAc/GalNAc subfamily. In terms of tissue distribution, expressed in cornea. Mainly expressed in brain. Also expressed in spinal cord and trachea.

The protein resides in the golgi apparatus membrane. It catalyses the reaction 3'-phosphoadenylyl sulfate + keratan = adenosine 3',5'-bisphosphate + keratan 6'-sulfate.. Sulfotransferase that utilizes 3'-phospho-5'-adenylyl sulfate (PAPS) as sulfonate donor to catalyze the transfer of sulfate to position 6 of non-reducing N-acetylglucosamine (GlcNAc) residues of keratan. Cooperates with B4GALT4 galactosyltransferase and B3GNT7 N-acetylglucosaminyltransferase to construct and elongate the sulfated disaccharide unit [-&gt;3Galbeta1-&gt;4(6-sulfoGlcNAcbeta)1-&gt;] within keratan sulfate polymer. Involved in biosynthesis of keratan sulfate in cornea, with an impact on proteoglycan fibril organization and corneal transparency. Involved in sulfation of endothelial mucins such as GLYCAM1. The chain is Carbohydrate sulfotransferase 6 from Homo sapiens (Human).